The following is a 356-amino-acid chain: GTPase Obg (356 aa).

An Obg domain is found at 1 to 159; that stretch reads MKFIDRVKIH…RWLRLELKLL (159 aa). The region spanning 160–331 is the OBG-type G domain; that stretch reads ADVGLLGMPN…LVAEVARELE (172 aa). Residues 166–173, 191–195, 213–216, 283–286, and 312–314 contribute to the GTP site; these read GMPNAGKS, FTTLV, DIPG, SKID, and SAV. Residues S173 and T193 each coordinate Mg(2+).

This sequence belongs to the TRAFAC class OBG-HflX-like GTPase superfamily. OBG GTPase family. In terms of assembly, monomer. Requires Mg(2+) as cofactor.

The protein localises to the cytoplasm. Functionally, an essential GTPase which binds GTP, GDP and possibly (p)ppGpp with moderate affinity, with high nucleotide exchange rates and a fairly low GTP hydrolysis rate. Plays a role in control of the cell cycle, stress response, ribosome biogenesis and in those bacteria that undergo differentiation, in morphogenesis control. This is GTPase Obg from Syntrophotalea carbinolica (strain DSM 2380 / NBRC 103641 / GraBd1) (Pelobacter carbinolicus).